A 148-amino-acid polypeptide reads, in one-letter code: Putative nickel-responsive regulator (148 aa).

Ni(2+) contacts are provided by histidine 77, histidine 88, histidine 90, and cysteine 96.

This sequence belongs to the transcriptional regulatory CopG/NikR family. The cofactor is Ni(2+).

In terms of biological role, transcriptional regulator. In Bradyrhizobium diazoefficiens (strain JCM 10833 / BCRC 13528 / IAM 13628 / NBRC 14792 / USDA 110), this protein is Putative nickel-responsive regulator.